Here is a 334-residue protein sequence, read N- to C-terminus: Replication factor C small subunit (334 aa).

Residue 49–56 (GPPGVGKT) coordinates ATP.

The protein belongs to the activator 1 small subunits family. RfcS subfamily. As to quaternary structure, heteromultimer composed of small subunits (RfcS) and large subunits (RfcL).

Functionally, part of the RFC clamp loader complex which loads the PCNA sliding clamp onto DNA. This chain is Replication factor C small subunit, found in Methanosarcina barkeri (strain Fusaro / DSM 804).